Here is a 152-residue protein sequence, read N- to C-terminus: Deoxyuridine 5'-triphosphate nucleotidohydrolase (152 aa).

Substrate is bound by residues 62 to 64 (RSG), Asn75, and 79 to 81 (TVD).

Belongs to the dUTPase family. Requires Mg(2+) as cofactor.

It carries out the reaction dUTP + H2O = dUMP + diphosphate + H(+). It functions in the pathway pyrimidine metabolism; dUMP biosynthesis; dUMP from dCTP (dUTP route): step 2/2. In terms of biological role, this enzyme is involved in nucleotide metabolism: it produces dUMP, the immediate precursor of thymidine nucleotides and it decreases the intracellular concentration of dUTP so that uracil cannot be incorporated into DNA. The sequence is that of Deoxyuridine 5'-triphosphate nucleotidohydrolase from Leifsonia xyli subsp. xyli (strain CTCB07).